A 331-amino-acid polypeptide reads, in one-letter code: SERPKRVFNIYWNVPTFMCHQYGLYFDEVTNFNIKHNSKDDFQGDKISIFYDPGEFPALLPLKEGNYKIRNGGVPQEGNITIHLQRFIENLDKTYPNRNFNGIGVIDFERWRPIFRQNWGNMMIHKKFSIDLVRNEHPFWDKKMIELEASKRFEKYARLFMEETLKLAKKTRKQADWGYYGYPYCFNMSPNNLVPDCDATAMLENDKMSWLFNNQNVLLPSVYIRHELTPDQRVGLVQGRVKEAVRISNNLKHSPKVLSYWWYVYQDDTNTFLTETDVKKTFQEIAINGGDGIIIWGSSSDVNSLSKCKRLREYLLTVLGPITVNVTETVN.

2 cysteine pairs are disulfide-bonded: cysteine 19–cysteine 308 and cysteine 185–cysteine 197. Asparagine 79 carries an N-linked (GlcNAc...) asparagine glycan. Residue glutamate 109 is the Proton donor of the active site. N-linked (GlcNAc...) asparagine glycosylation occurs at asparagine 325.

It belongs to the glycosyl hydrolase 56 family. Expressed by the venom gland.

It localises to the secreted. It carries out the reaction Random hydrolysis of (1-&gt;4)-linkages between N-acetyl-beta-D-glucosamine and D-glucuronate residues in hyaluronate.. Functionally, hydrolyzes high molecular weight hyaluronic acid to produce small oligosaccharides. The protein is Hyaluronidase of Dolichovespula maculata (Bald-faced hornet).